The sequence spans 135 residues: Large ribosomal subunit protein uL16 (135 aa).

It belongs to the universal ribosomal protein uL16 family. As to quaternary structure, part of the 50S ribosomal subunit.

Functionally, binds 23S rRNA and is also seen to make contacts with the A and possibly P site tRNAs. The polypeptide is Large ribosomal subunit protein uL16 (Desulfatibacillum aliphaticivorans).